We begin with the raw amino-acid sequence, 216 residues long: Nucleolar protein 12 (216 aa).

Residues 33–97 (GFHKRKVERK…LVTAKTESVQ (65 aa)) adopt a coiled-coil conformation. The interval 120 to 216 (LLGLPLPEQG…MTGKARHNGE (97 aa)) is disordered. Acidic residues predominate over residues 129-140 (GDQDGSQEEEVS). 2 stretches are compositionally biased toward basic residues: residues 171 to 183 (AHSRKKVKRKHPR) and 200 to 216 (KTQRRRRMTGKARHNGE).

This sequence belongs to the RRP17 family. In terms of assembly, interacts with KIAA1191.

Its subcellular location is the nucleus. The protein resides in the nucleolus. It is found in the cytoplasm. In terms of biological role, multifunctional RNA binding protein that plays a role in RNA metabolism and DNA maintenance. Participates in the resolution of DNA stress and the maintenance of genome integrity by localizing to sites of DNA insults. Also plays a role in proper nucleolar organization by limiting nucleolar size and regulating nucleolar number. Mechanistically, regulates the nucleolar levels of fibrillarin and nucleolin, two key players in pre-rRNA processing and ribosome assembly. The polypeptide is Nucleolar protein 12 (Nol12) (Rattus norvegicus (Rat)).